Reading from the N-terminus, the 473-residue chain is Photosystem II CP43 reaction center protein (473 aa).

Residues 1-14 constitute a propeptide that is removed on maturation; it reads MKTLYSLRRSYPVE. Residue Thr-15 is modified to N-acetylthreonine. Thr-15 bears the Phosphothreonine mark. A run of 5 helical transmembrane segments spans residues 69–93, 134–155, 178–200, 255–275, and 291–312; these read LFEV…PHLA, LIGP…KDRN, KALY…RKIT, KPFA…LSYS, and WFNN…ASQA. Glu-367 serves as a coordination point for [CaMn4O5] cluster. The chain crosses the membrane as a helical span at residues 447–471; sequence RARAAAAGFEKGIDRDFEPVLSMTP.

Belongs to the PsbB/PsbC family. PsbC subfamily. PSII is composed of 1 copy each of membrane proteins PsbA, PsbB, PsbC, PsbD, PsbE, PsbF, PsbH, PsbI, PsbJ, PsbK, PsbL, PsbM, PsbT, PsbX, PsbY, PsbZ, Psb30/Ycf12, at least 3 peripheral proteins of the oxygen-evolving complex and a large number of cofactors. It forms dimeric complexes. Requires Binds multiple chlorophylls and provides some of the ligands for the Ca-4Mn-5O cluster of the oxygen-evolving complex. It may also provide a ligand for a Cl- that is required for oxygen evolution. PSII binds additional chlorophylls, carotenoids and specific lipids. as cofactor.

The protein resides in the plastid. The protein localises to the chloroplast thylakoid membrane. Functionally, one of the components of the core complex of photosystem II (PSII). It binds chlorophyll and helps catalyze the primary light-induced photochemical processes of PSII. PSII is a light-driven water:plastoquinone oxidoreductase, using light energy to abstract electrons from H(2)O, generating O(2) and a proton gradient subsequently used for ATP formation. The polypeptide is Photosystem II CP43 reaction center protein (Abies alba (Edeltanne)).